The following is a 265-amino-acid chain: 4-hydroxy-tetrahydrodipicolinate reductase (265 aa).

Residue 16 to 21 (GANGKM) participates in NAD(+) binding. Arg-43 is an NADP(+) binding site. NAD(+) contacts are provided by residues 106 to 108 (GTT) and 130 to 133 (SENF). The active-site Proton donor/acceptor is His-164. His-165 provides a ligand contact to (S)-2,3,4,5-tetrahydrodipicolinate. Lys-168 acts as the Proton donor in catalysis. A (S)-2,3,4,5-tetrahydrodipicolinate-binding site is contributed by 174–175 (AT).

This sequence belongs to the DapB family. Homotetramer.

It localises to the cytoplasm. The enzyme catalyses (S)-2,3,4,5-tetrahydrodipicolinate + NAD(+) + H2O = (2S,4S)-4-hydroxy-2,3,4,5-tetrahydrodipicolinate + NADH + H(+). It catalyses the reaction (S)-2,3,4,5-tetrahydrodipicolinate + NADP(+) + H2O = (2S,4S)-4-hydroxy-2,3,4,5-tetrahydrodipicolinate + NADPH + H(+). The protein operates within amino-acid biosynthesis; L-lysine biosynthesis via DAP pathway; (S)-tetrahydrodipicolinate from L-aspartate: step 4/4. Its function is as follows. Catalyzes the conversion of 4-hydroxy-tetrahydrodipicolinate (HTPA) to tetrahydrodipicolinate. The protein is 4-hydroxy-tetrahydrodipicolinate reductase of Wigglesworthia glossinidia brevipalpis.